The primary structure comprises 448 residues: Fumarate hydratase class II (448 aa).

Substrate is bound by residues 83–85, 113–116, 123–125, and T171; these read SGT, HPND, and SSN. Catalysis depends on H172, which acts as the Proton donor/acceptor. Residue S302 is part of the active site. Substrate is bound by residues S303 and 308–310; that span reads KVN.

It belongs to the class-II fumarase/aspartase family. Fumarase subfamily. As to quaternary structure, homotetramer.

It localises to the cytoplasm. The enzyme catalyses (S)-malate = fumarate + H2O. Its pathway is carbohydrate metabolism; tricarboxylic acid cycle; (S)-malate from fumarate: step 1/1. Involved in the TCA cycle. Catalyzes the stereospecific interconversion of fumarate to L-malate. The chain is Fumarate hydratase class II from Blochmanniella floridana.